The following is a 185-amino-acid chain: Ribosome-recycling factor (185 aa).

This sequence belongs to the RRF family.

The protein localises to the cytoplasm. Functionally, responsible for the release of ribosomes from messenger RNA at the termination of protein biosynthesis. May increase the efficiency of translation by recycling ribosomes from one round of translation to another. The protein is Ribosome-recycling factor of Citrifermentans bemidjiense (strain ATCC BAA-1014 / DSM 16622 / JCM 12645 / Bem) (Geobacter bemidjiensis).